A 267-amino-acid polypeptide reads, in one-letter code: 4-hydroxy-tetrahydrodipicolinate reductase (267 aa).

8 to 13 (GAAGRM) is an NAD(+) binding site. An NADP(+)-binding site is contributed by Arg35. Residues 98–100 (GTT) and 122–125 (AANF) contribute to the NAD(+) site. Catalysis depends on His155, which acts as the Proton donor/acceptor. A (S)-2,3,4,5-tetrahydrodipicolinate-binding site is contributed by His156. The active-site Proton donor is Lys159. 165–166 (GT) contributes to the (S)-2,3,4,5-tetrahydrodipicolinate binding site.

The protein belongs to the DapB family.

The protein resides in the cytoplasm. It carries out the reaction (S)-2,3,4,5-tetrahydrodipicolinate + NAD(+) + H2O = (2S,4S)-4-hydroxy-2,3,4,5-tetrahydrodipicolinate + NADH + H(+). It catalyses the reaction (S)-2,3,4,5-tetrahydrodipicolinate + NADP(+) + H2O = (2S,4S)-4-hydroxy-2,3,4,5-tetrahydrodipicolinate + NADPH + H(+). The protein operates within amino-acid biosynthesis; L-lysine biosynthesis via DAP pathway; (S)-tetrahydrodipicolinate from L-aspartate: step 4/4. Functionally, catalyzes the conversion of 4-hydroxy-tetrahydrodipicolinate (HTPA) to tetrahydrodipicolinate. This chain is 4-hydroxy-tetrahydrodipicolinate reductase, found in Azotobacter vinelandii (strain DJ / ATCC BAA-1303).